The sequence spans 65 residues: Large ribosomal subunit protein bL35 (65 aa).

This sequence belongs to the bacterial ribosomal protein bL35 family.

The chain is Large ribosomal subunit protein bL35 from Aliarcobacter butzleri (strain RM4018) (Arcobacter butzleri).